The primary structure comprises 1680 residues: Sodium channel protein type 7 subunit alpha (1680 aa).

The Cytoplasmic portion of the chain corresponds to 1-117 (MLTSPEPKGL…RRAVIKVLVH (117 aa)). The stretch at 100-401 (TLSPLSSLRR…ILTMAYEQEK (302 aa)) is one I repeat. The chain crosses the membrane as a helical span at residues 118-137 (PLFRLLILISVLTDSILMCM). The Extracellular segment spans residues 138 to 141 (SNLP). Residues 142–167 (EWILAVENTLLGIYTFEILVKVIARG) traverse the membrane as a helical segment. The Cytoplasmic segment spans residues 168–178 (IWAGSFSFLGD). A helical transmembrane segment spans residues 179–196 (LWNWLDFSVTLFELITRS). The Extracellular segment spans residues 197-200 (SPLS). A helical membrane pass occupies residues 201 to 219 (SLPMFKTIRTLRILKIIPL). Residues 220–237 (NHGLQSIVVTLVQCLKKL) lie on the Cytoplasmic side of the membrane. A helical membrane pass occupies residues 238–259 (LGAIALALFFLTVSSLFGMGLF). Topologically, residues 260 to 338 (MGNLKHKCVR…PDNGFTSFDN (79 aa)) are extracellular. A disulfide bridge links Cys267 with Cys307. Asn281 and Asn309 each carry an N-linked (GlcNAc...) asparagine glycan. An intramembrane region (pore-forming) is located at residues 339–366 (FGWALLAMFRLMTQDYPELLYHQILYAS). Residue Gly367 is a topological domain, extracellular. A helical membrane pass occupies residues 368-407 (KIYMIFFVLISFWFAFYMASLFLGILTMAYEQEKQRASEE). Residues 408 to 505 (SRDMDSKCHQ…EFADRIITHP (98 aa)) are Cytoplasmic-facing. Residues 487 to 756 (CSPCWIKLNE…QLAVAWIKMV (270 aa)) form an II repeat. A helical membrane pass occupies residues 506–521 (LFDLFLVICIILNICF). The Extracellular portion of the chain corresponds to 522 to 530 (LALEHFPMS). A helical transmembrane segment spans residues 531-559 (EELMSLLAIGNLVFIGIYTIEMILKIIAM). Over 560 to 568 (HPYGYFQIS) the chain is Cytoplasmic. Residues 569–586 (WHIFDSILVVLGLTEMLL) traverse the membrane as a helical segment. At 587–592 (ADIEEI) the chain is on the extracellular side. A helical transmembrane segment spans residues 593-608 (TVFILVPLIFIKLGKY). Residues 609 to 625 (APPFKNLMRILGRALVA) are Cytoplasmic-facing. The helical transmembrane segment at 626–654 (LKDLVLLVSIFIYFSAVFGMKLFGRSYKD) threads the bilayer. Topologically, residues 655–672 (CVCHVDQDCQRQRWHMSD) are extracellular. Disulfide bonds link Cys657–Cys663 and Cys695–Cys704. Positions 673-699 (FLHAYVTVFRILCGEWIETLWECMEVA) form an intramembrane region, pore-forming. A topological domain (extracellular) is located at residue Gly700. A helical transmembrane segment spans residues 701–731 (EAWCIPFYMMVILIGNLLILYLFVALVSSFA). The Cytoplasmic portion of the chain corresponds to 732 to 933 (SYDATTEVSK…KTCCKIVENS (202 aa)). A compositionally biased stretch (polar residues) spans 807-833 (DQSSGTEKTPVTESESQSLIASPSVSE). The segment at 807 to 874 (DQSSGTEKTP…MKQSSSSECS (68 aa)) is disordered. A Phosphoserine modification is found at Ser842. The III repeat unit spans residues 915 to 1223 (NGKIWRNIRK…KKQYRALKKL (309 aa)). Residues 934–952 (WFECFIGLVTLLCTGTLAL) traverse the membrane as a helical segment. Residues 953 to 960 (EDIYIDQR) are Extracellular-facing. Residues 961–989 (KTIKIFLEYGDMIFAYIFILEMLLKWVAY) form a helical membrane-spanning segment. Topologically, residues 990–997 (GFKAYFSN) are cytoplasmic. A helical membrane pass occupies residues 998–1019 (NWYKLDFMVVIVLCLSLIGKTR). Glu1020 is a topological domain (extracellular). The helical transmembrane segment at 1021 to 1039 (DLNPLASIKFLRALRVLSQ) threads the bilayer. Residues 1040-1054 (FERMKVVLRALIKTT) lie on the Cytoplasmic side of the membrane. Residues 1055–1079 (LPAVSVFLVCLMIWLLFSVMGVFLF) traverse the membrane as a helical segment. Residues 1080–1126 (AGKFYECIDPTRGERFSVFEVMNKSQCENLVFNESMPWENAKLNFDN) lie on the Extracellular side of the membrane. A disulfide bridge links Cys1086 with Cys1106. 2 N-linked (GlcNAc...) asparagine glycosylation sites follow: Asn1102 and Asn1112. Residues 1127–1153 (VGNGFLSLFQVATFNGWISIMNSAIDS) constitute an intramembrane region (pore-forming). The Extracellular segment spans residues 1154-1166 (VGVYMQPSFEHSL). The chain crosses the membrane as a helical span at residues 1167–1201 (HMYTYFIIFVVFGLFLPLCMLIGVIIRNFNKQKIK). The Cytoplasmic portion of the chain corresponds to 1202–1249 (QGGSNIFITVKQKKQYRALKKLLYADSQKPAARPRNKFQGFICDVVTH). Residues 1232-1530 (AARPRNKFQG…WNRFDPDRTQ (299 aa)) form an IV repeat. A helical transmembrane segment spans residues 1250-1271 (RVFNVIIILLICFQATTIMIQN). Residues 1272–1275 (DEQS) are Extracellular-facing. Residues 1276–1304 (PQIETAVFWMNSLFTMLFTLECILKLTAF) form a helical membrane-spanning segment. Residues 1305–1311 (RCHYFTS) lie on the Cytoplasmic side of the membrane. The helical transmembrane segment at 1312-1337 (AWNVHDFMVVVFSITGLLLPLSIGQY) threads the bilayer. The Extracellular portion of the chain corresponds to 1338–1340 (FVP). A helical transmembrane segment spans residues 1341 to 1361 (PSLVQLLLLSRIIHVLRPGKG). Topologically, residues 1362–1376 (PKVFHDLMLPLMLSL) are cytoplasmic. Residues 1377-1401 (PALLNIALLIFLVMFIYAIFGMYNF) form a helical membrane-spanning segment. Residues 1402-1419 (AYVKKEAGINDVSNFETF) lie on the Extracellular side of the membrane. Positions 1420 to 1443 (GSSMLCLFQVTTFSGWDGMLDAIF) form an intramembrane region, pore-forming. Topologically, residues 1444 to 1467 (NSQWSDCDPDKINPGTQVRGDCGS) are extracellular. Cysteines 1450 and 1465 form a disulfide. Residues 1468-1503 (PSVGIFYFVSYILISWLIIVNMYVVLIMEFLSIPSK) form a helical membrane-spanning segment. The Cytoplasmic segment spans residues 1504 to 1680 (RKNRTLSEDD…EEKASIQTQI (177 aa)). Positions 1646 to 1680 (KIQDIPEIDDGREDPNSKGVHSGQIEEKASIQTQI) are disordered.

This sequence belongs to the sodium channel (TC 1.A.1.10) family. SCN7A subfamily. In terms of assembly, the sodium channel formed by SCN7A is probably a heterooligomeric complex consisting of the ion conducting pore forming alpha subunit SCN7A and regulatory beta subunits such as SCN3B. Interacts with ATP1A1; activates ATP1A1 and thereby indirectly signals to nearby neurons to regulate sodium homeostasis. As to expression, not tissue specific but widely expressed.

It localises to the cell membrane. It catalyses the reaction Na(+)(in) = Na(+)(out). Its function is as follows. Sodium leak channel functioning as an osmosensor regulating sodium ion levels in various tissues and organs. While most sodium channels are voltage-gated, SCN7A is not and lets sodium flow through membrane along its concentration gradient. In glial cells of the central nervous system, senses body-fluid sodium levels and controls salt intake behavior as well as voluntary water intake through activation of nearby neurons to maintain appropriate sodium levels in the body. By mediating sodium influx into keratinocytes, also plays a role in skin barrier homeostasis. The sequence is that of Sodium channel protein type 7 subunit alpha from Rattus norvegicus (Rat).